A 356-amino-acid polypeptide reads, in one-letter code: GTPase Obg (356 aa).

Residues 1-159 (MKFLDEAKVY…RWIWLRMKLI (159 aa)) enclose the Obg domain. In terms of domain architecture, OBG-type G spans 160–327 (ADAGLVGLPN…ALRKLADVVG (168 aa)). Residues 166 to 173 (GLPNAGKS), 191 to 195 (FTTLH), 212 to 215 (DIPG), 279 to 282 (NKID), and 308 to 310 (SGA) contribute to the GTP site. Mg(2+) is bound by residues S173 and T193. Residues 327 to 356 (GEQPVSSKAKNAVESAATEEPWAAPVPPQG) are disordered.

Belongs to the TRAFAC class OBG-HflX-like GTPase superfamily. OBG GTPase family. As to quaternary structure, monomer. Mg(2+) is required as a cofactor.

The protein resides in the cytoplasm. Functionally, an essential GTPase which binds GTP, GDP and possibly (p)ppGpp with moderate affinity, with high nucleotide exchange rates and a fairly low GTP hydrolysis rate. Plays a role in control of the cell cycle, stress response, ribosome biogenesis and in those bacteria that undergo differentiation, in morphogenesis control. This Bradyrhizobium sp. (strain ORS 278) protein is GTPase Obg.